Reading from the N-terminus, the 240-residue chain is UDP-2,3-diacylglucosamine hydrolase (240 aa).

Mn(2+) is bound by residues D8, H10, D41, N79, and H114. 79–80 is a substrate binding site; it reads NR. Substrate-binding residues include D122, S160, N164, K167, and H195. H195 and H197 together coordinate Mn(2+).

It belongs to the LpxH family. Mn(2+) is required as a cofactor.

It localises to the cell inner membrane. It catalyses the reaction UDP-2-N,3-O-bis[(3R)-3-hydroxytetradecanoyl]-alpha-D-glucosamine + H2O = 2-N,3-O-bis[(3R)-3-hydroxytetradecanoyl]-alpha-D-glucosaminyl 1-phosphate + UMP + 2 H(+). It participates in glycolipid biosynthesis; lipid IV(A) biosynthesis; lipid IV(A) from (3R)-3-hydroxytetradecanoyl-[acyl-carrier-protein] and UDP-N-acetyl-alpha-D-glucosamine: step 4/6. Its function is as follows. Hydrolyzes the pyrophosphate bond of UDP-2,3-diacylglucosamine to yield 2,3-diacylglucosamine 1-phosphate (lipid X) and UMP by catalyzing the attack of water at the alpha-P atom. Involved in the biosynthesis of lipid A, a phosphorylated glycolipid that anchors the lipopolysaccharide to the outer membrane of the cell. The sequence is that of UDP-2,3-diacylglucosamine hydrolase from Salmonella typhi.